A 370-amino-acid polypeptide reads, in one-letter code: Queuine tRNA-ribosyltransferase (370 aa).

D93 acts as the Proton acceptor in catalysis. Substrate-binding positions include 93–97, D147, Q189, and G216; that span reads DSGGF. Residues 247–253 form an RNA binding region; the sequence is GVGSPDC. The Nucleophile role is filled by D266. The segment at 271–275 is RNA binding; important for wobble base 34 recognition; the sequence is TRIAR. Residues C304, C306, C309, and H335 each contribute to the Zn(2+) site.

Belongs to the queuine tRNA-ribosyltransferase family. Homodimer. Within each dimer, one monomer is responsible for RNA recognition and catalysis, while the other monomer binds to the replacement base PreQ1. Zn(2+) serves as cofactor.

The catalysed reaction is 7-aminomethyl-7-carbaguanine + guanosine(34) in tRNA = 7-aminomethyl-7-carbaguanosine(34) in tRNA + guanine. It participates in tRNA modification; tRNA-queuosine biosynthesis. Its function is as follows. Catalyzes the base-exchange of a guanine (G) residue with the queuine precursor 7-aminomethyl-7-deazaguanine (PreQ1) at position 34 (anticodon wobble position) in tRNAs with GU(N) anticodons (tRNA-Asp, -Asn, -His and -Tyr). Catalysis occurs through a double-displacement mechanism. The nucleophile active site attacks the C1' of nucleotide 34 to detach the guanine base from the RNA, forming a covalent enzyme-RNA intermediate. The proton acceptor active site deprotonates the incoming PreQ1, allowing a nucleophilic attack on the C1' of the ribose to form the product. After dissociation, two additional enzymatic reactions on the tRNA convert PreQ1 to queuine (Q), resulting in the hypermodified nucleoside queuosine (7-(((4,5-cis-dihydroxy-2-cyclopenten-1-yl)amino)methyl)-7-deazaguanosine). In Desulforamulus reducens (strain ATCC BAA-1160 / DSM 100696 / MI-1) (Desulfotomaculum reducens), this protein is Queuine tRNA-ribosyltransferase.